Reading from the N-terminus, the 254-residue chain is Alcohol dehydrogenase (254 aa).

10–33 (FVAGLGGIGLDTSRELVKRNLKNL) contacts NAD(+). Position 138 (Ser-138) interacts with substrate. The active-site Proton acceptor is the Tyr-151.

The protein belongs to the short-chain dehydrogenases/reductases (SDR) family. As to quaternary structure, homodimer.

The enzyme catalyses a primary alcohol + NAD(+) = an aldehyde + NADH + H(+). It carries out the reaction a secondary alcohol + NAD(+) = a ketone + NADH + H(+). The polypeptide is Alcohol dehydrogenase (Adh) (Drosophila persimilis (Fruit fly)).